The chain runs to 549 residues: MQADYVIVGSGSAGSAIAYRLSEDGRYSVIVIEAGGSDFGPFIQMPAALAWPMSMKRYNWGYLSEPEPNLDNRRITAPRGKVIGGSSSINGLVYVRGHAEDFNRWEELGAQGWAYADVLPYFKRMEHSHGGEEGWRGTDGPLHVQRGPVSNPLFHAFIQAGAQAGFELTDDYNGSKQEGFGLMEQTIHNGRRWSAANAYLKPALKRGNVTLVNGFARKVIIENGRAVGVEIERRGRVETVKANREVIVSASSFNSPKLLMLSGIGPAAHLKDMGIEVKADRPGVGANLQDHMEFYFQQVSTKPVSLYSWLPWFWQGVAGAQWLLSKGGLGASNQFEACAFLRSAPGLKQPDIQYHFLPVAISYDGKAAAKSHGFQAHVGYNLSKSRGNVTLRSADPHDDPVIRFNYMSHPEDWEKFRHCVRLTREIFGQKAFDDFRGPEIQPGENIETDEQIDAFLREHLESAYHPCGTCRMGDRNDPMAVVDPECRVIGVEGLRVADSSIFPHVTYGNLNGPSIMTGEKAADHILGKTPLPRSNQEPWVNPRAAVSDR.

Residue aspartate 4 to glutamate 33 coordinates FAD. Histidine 465 functions as the Proton acceptor in the catalytic mechanism. The segment at lysine 528–arginine 549 is disordered.

This sequence belongs to the GMC oxidoreductase family. It depends on FAD as a cofactor.

The catalysed reaction is choline + A = betaine aldehyde + AH2. It carries out the reaction betaine aldehyde + NAD(+) + H2O = glycine betaine + NADH + 2 H(+). It participates in amine and polyamine biosynthesis; betaine biosynthesis via choline pathway; betaine aldehyde from choline (cytochrome c reductase route): step 1/1. Its function is as follows. Involved in the biosynthesis of the osmoprotectant glycine betaine. Catalyzes the oxidation of choline to betaine aldehyde and betaine aldehyde to glycine betaine at the same rate. The sequence is that of Oxygen-dependent choline dehydrogenase from Agrobacterium fabrum (strain C58 / ATCC 33970) (Agrobacterium tumefaciens (strain C58)).